The following is a 321-amino-acid chain: tRNA U34 carboxymethyltransferase (321 aa).

Residues K90, W104, K109, G129, 151–153 (DPT), 180–181 (IE), M195, Y199, and R314 contribute to the carboxy-S-adenosyl-L-methionine site.

This sequence belongs to the class I-like SAM-binding methyltransferase superfamily. CmoB family. Homotetramer.

It carries out the reaction carboxy-S-adenosyl-L-methionine + 5-hydroxyuridine(34) in tRNA = 5-carboxymethoxyuridine(34) in tRNA + S-adenosyl-L-homocysteine + H(+). Functionally, catalyzes carboxymethyl transfer from carboxy-S-adenosyl-L-methionine (Cx-SAM) to 5-hydroxyuridine (ho5U) to form 5-carboxymethoxyuridine (cmo5U) at position 34 in tRNAs. This chain is tRNA U34 carboxymethyltransferase, found in Histophilus somni (strain 2336) (Haemophilus somnus).